Here is a 292-residue protein sequence, read N- to C-terminus: Protease HtpX homolog (292 aa).

Transmembrane regions (helical) follow at residues 4 to 24 (ILLF…VASL) and 39 to 59 (GALL…SLLI). His144 is a binding site for Zn(2+). Glu145 is an active-site residue. His148 is a Zn(2+) binding site. 2 helical membrane passes run 159–179 (LIQG…GYAV) and 199–219 (VTTI…VAWF). Glu224 serves as a coordination point for Zn(2+).

The protein belongs to the peptidase M48B family. Zn(2+) is required as a cofactor.

The protein resides in the cell inner membrane. This Verminephrobacter eiseniae (strain EF01-2) protein is Protease HtpX homolog.